The following is a 173-amino-acid chain: MPDRRSVYEYEDLLACGRGELFGPGNAQLPLPPMLMFDRIVEITETGGEFGKGVVRAELDVKPDLWFFACHFKNDPVMPGCLGLDAMWQMVGFFLGWSGGEGRGRALGLGDLKFSGQVLPTARKVVYNVDIKRVMRSKLVLGIADGWLSMDGEIIYRAKDLKVGLFKQGATPS.

Histidine 71 is a catalytic residue.

This sequence belongs to the thioester dehydratase family. FabA subfamily. Homodimer.

Its subcellular location is the cytoplasm. The catalysed reaction is a (3R)-hydroxyacyl-[ACP] = a (2E)-enoyl-[ACP] + H2O. The enzyme catalyses (3R)-hydroxydecanoyl-[ACP] = (2E)-decenoyl-[ACP] + H2O. It carries out the reaction (2E)-decenoyl-[ACP] = (3Z)-decenoyl-[ACP]. Its pathway is lipid metabolism; fatty acid biosynthesis. In terms of biological role, necessary for the introduction of cis unsaturation into fatty acids. Catalyzes the dehydration of (3R)-3-hydroxydecanoyl-ACP to E-(2)-decenoyl-ACP and then its isomerization to Z-(3)-decenoyl-ACP. Can catalyze the dehydratase reaction for beta-hydroxyacyl-ACPs with saturated chain lengths up to 16:0, being most active on intermediate chain length. This chain is 3-hydroxydecanoyl-[acyl-carrier-protein] dehydratase, found in Bradyrhizobium sp. (strain BTAi1 / ATCC BAA-1182).